We begin with the raw amino-acid sequence, 67 residues long: Prokaryotic ubiquitin-like protein Pup (67 aa).

Residues 1-36 (MPQQFEQPQAQQAATQEDDALATTQAAAQTESADQA) form a disordered region. The ARC ATPase binding stretch occupies residues 23–61 (TTQAAAQTESADQADVLDDILDDIESTLETNAEEYVNSF). Glutamate 67 is covalently cross-linked (Isoglutamyl lysine isopeptide (Glu-Lys) (interchain with K-? in acceptor proteins)).

It belongs to the prokaryotic ubiquitin-like protein family. In terms of assembly, strongly interacts with the proteasome-associated ATPase ARC through a hydrophobic interface; the interacting region of Pup lies in its C-terminal half. There is one Pup binding site per ARC hexamer ring.

The protein operates within protein degradation; proteasomal Pup-dependent pathway. In terms of biological role, protein modifier that is covalently attached to lysine residues of substrate proteins, thereby targeting them for proteasomal degradation. The tagging system is termed pupylation. This Bifidobacterium longum (strain DJO10A) protein is Prokaryotic ubiquitin-like protein Pup.